Here is a 335-residue protein sequence, read N- to C-terminus: Adenosine deaminase (335 aa).

Zn(2+)-binding residues include H12 and H14. The substrate site is built by H14 and D16. Residue H197 participates in Zn(2+) binding. The active-site Proton donor is the E200. Residue D278 coordinates Zn(2+).

Belongs to the metallo-dependent hydrolases superfamily. Adenosine and AMP deaminases family. Adenosine deaminase subfamily. Zn(2+) serves as cofactor.

It carries out the reaction adenosine + H2O + H(+) = inosine + NH4(+). It catalyses the reaction 2'-deoxyadenosine + H2O + H(+) = 2'-deoxyinosine + NH4(+). Catalyzes the hydrolytic deamination of adenosine and 2-deoxyadenosine. This Clostridium botulinum (strain Kyoto / Type A2) protein is Adenosine deaminase.